A 268-amino-acid chain; its full sequence is Undecaprenyl-diphosphatase (268 aa).

7 helical membrane passes run 5–25 (TIAQ…IPVS), 43–63 (GKAF…SVYA), 84–104 (LGIL…YQII), 107–127 (VLFE…IVLL), 184–204 (AAEF…AYDL), 214–234 (ADLQ…VLVV), and 247–267 (ALFG…VLVL).

It belongs to the UppP family.

Its subcellular location is the cell inner membrane. It catalyses the reaction di-trans,octa-cis-undecaprenyl diphosphate + H2O = di-trans,octa-cis-undecaprenyl phosphate + phosphate + H(+). Its function is as follows. Catalyzes the dephosphorylation of undecaprenyl diphosphate (UPP). Confers resistance to bacitracin. The chain is Undecaprenyl-diphosphatase from Chelativorans sp. (strain BNC1).